A 706-amino-acid chain; its full sequence is Kinesin-like protein KIP2 (706 aa).

Composition is skewed to low complexity over residues 1-28 (MIQK…QSPS) and 36-63 (SNLT…RSNS). Positions 1 to 139 (MIQKMSPSLR…QPRSNSHHGS (139 aa)) are disordered. The Kinesin motor domain maps to 102–493 (SITVTIRPKP…LRFASRAKNV (392 aa)). Polar residues predominate over residues 127–139 (RYSQPRSNSHHGS). 202–209 (GMTGSGKT) lines the ATP pocket. The interval 413-445 (VGSNIPSPSASGSSSSSGNATNNGTSPSNHIPY) is disordered. The span at 414–441 (GSNIPSPSASGSSSSSGNATNNGTSPSN) shows a compositional bias: low complexity. 3 coiled-coil regions span residues 507–541 (NNDG…NIGE), 569–589 (MRAE…LLDK), and 612–689 (TLLE…RALK).

This sequence belongs to the TRAFAC class myosin-kinesin ATPase superfamily. Kinesin family. As to quaternary structure, might be dimeric.

It localises to the cytoplasm. It is found in the cytoskeleton. In terms of biological role, required for assembly of the mitotic spindle. The polypeptide is Kinesin-like protein KIP2 (KIP2) (Saccharomyces cerevisiae (strain ATCC 204508 / S288c) (Baker's yeast)).